The sequence spans 408 residues: Multifunctional CCA protein (408 aa).

ATP-binding residues include glycine 8 and arginine 11. CTP is bound by residues glycine 8 and arginine 11. The Mg(2+) site is built by aspartate 21 and aspartate 23. ATP-binding residues include arginine 91, arginine 137, and arginine 140. Arginine 91, arginine 137, and arginine 140 together coordinate CTP. The HD domain maps to 228–329 (TGVHVLSVLE…LELLQSFDVY (102 aa)).

It belongs to the tRNA nucleotidyltransferase/poly(A) polymerase family. Bacterial CCA-adding enzyme type 1 subfamily. As to quaternary structure, monomer. Can also form homodimers and oligomers. It depends on Mg(2+) as a cofactor. Requires Ni(2+) as cofactor.

The catalysed reaction is a tRNA precursor + 2 CTP + ATP = a tRNA with a 3' CCA end + 3 diphosphate. It carries out the reaction a tRNA with a 3' CCA end + 2 CTP + ATP = a tRNA with a 3' CCACCA end + 3 diphosphate. Catalyzes the addition and repair of the essential 3'-terminal CCA sequence in tRNAs without using a nucleic acid template. Adds these three nucleotides in the order of C, C, and A to the tRNA nucleotide-73, using CTP and ATP as substrates and producing inorganic pyrophosphate. tRNA 3'-terminal CCA addition is required both for tRNA processing and repair. Also involved in tRNA surveillance by mediating tandem CCA addition to generate a CCACCA at the 3' terminus of unstable tRNAs. While stable tRNAs receive only 3'-terminal CCA, unstable tRNAs are marked with CCACCA and rapidly degraded. In Pseudomonas syringae pv. syringae (strain B728a), this protein is Multifunctional CCA protein.